The chain runs to 80 residues: Protein UL148A (80 aa).

A helical membrane pass occupies residues W10 to V30.

It localises to the host membrane. Plays a role in the down-regulation of the host NKG2D ligand MICA by utilizing the lysosomal pathway for its degradation. In turn, MICA reduction diminishes NK-cell killing of HCMV-infected cells. This chain is Protein UL148A (UL148A), found in Human cytomegalovirus (strain Merlin) (HHV-5).